A 247-amino-acid chain; its full sequence is Type III pantothenate kinase (247 aa).

An ATP-binding site is contributed by 6-13 (DVGNTSIY). 102–105 (GADL) contributes to the substrate binding site. D104 acts as the Proton acceptor in catalysis. K(+) is bound at residue D122. Position 125 (T125) interacts with ATP. Substrate is bound at residue T176.

Belongs to the type III pantothenate kinase family. Homodimer. The cofactor is NH4(+). It depends on K(+) as a cofactor.

It is found in the cytoplasm. It catalyses the reaction (R)-pantothenate + ATP = (R)-4'-phosphopantothenate + ADP + H(+). Its pathway is cofactor biosynthesis; coenzyme A biosynthesis; CoA from (R)-pantothenate: step 1/5. Catalyzes the phosphorylation of pantothenate (Pan), the first step in CoA biosynthesis. The sequence is that of Type III pantothenate kinase from Acholeplasma laidlawii (strain PG-8A).